Consider the following 358-residue polypeptide: Ethanol acetyltransferase 1 (358 aa).

Residues 59–166 (PIVFIHGLFG…NAPINQPHIS (108 aa)) form the AB hydrolase-1 domain. Residues serine 132, aspartate 156, and histidine 305 each act as charge relay system in the active site.

It belongs to the AB hydrolase superfamily.

Its subcellular location is the mitochondrion. It catalyses the reaction ethanol + acetyl-CoA = ethyl acetate + CoA. It carries out the reaction acetyl-CoA + H2O = acetate + CoA + H(+). The enzyme catalyses ethyl acetate + H2O = ethanol + acetate + H(+). Its function is as follows. Alcohol acetyltransferase that catalyzes the synthesis of ethyl acetate from ethanol and acetyl-CoA. Can also function as a thioesterase by hydrolyzing acetyl-CoA in the absence of ethanol, as well as esterase hydrolyzing ethyl acetate. This chain is Ethanol acetyltransferase 1 (EAT1), found in Eremothecium cymbalariae (strain CBS 270.75 / DBVPG 7215 / KCTC 17166 / NRRL Y-17582) (Yeast).